Reading from the N-terminus, the 621-residue chain is UvrABC system protein C (621 aa).

A GIY-YIG domain is found at 13-92 (NEPGVYLMKN…IKKYSPKYNI (80 aa)). The 36-residue stretch at 204-239 (RSLLNKLKEEMQSASGNLEFEKAASLRDKMIAIENI) folds into the UVR domain.

This sequence belongs to the UvrC family. In terms of assembly, interacts with UvrB in an incision complex.

The protein resides in the cytoplasm. In terms of biological role, the UvrABC repair system catalyzes the recognition and processing of DNA lesions. UvrC both incises the 5' and 3' sides of the lesion. The N-terminal half is responsible for the 3' incision and the C-terminal half is responsible for the 5' incision. In Clostridium beijerinckii (strain ATCC 51743 / NCIMB 8052) (Clostridium acetobutylicum), this protein is UvrABC system protein C.